The chain runs to 80 residues: Small ribosomal subunit protein bS16c (80 aa).

It belongs to the bacterial ribosomal protein bS16 family.

Its subcellular location is the plastid. It is found in the chloroplast. This Lotus japonicus (Lotus corniculatus var. japonicus) protein is Small ribosomal subunit protein bS16c.